The following is a 177-amino-acid chain: MSRVAKAPVNIPAGVEVKLNGQLLTVKGKNGELSREIHNAVEVNQDANALTFVPRTGVANADAQAGTARALVNAMVIGVTEGFTKKLQLVGVGYRAQMKGNVVALSLGYSHPIEHTLPAGVTGECPSQTEIVLKSADKQLIGQVAADIRAYRRPEPYKGKGVRYSDEVVRTKEAKKK.

It belongs to the universal ribosomal protein uL6 family. In terms of assembly, part of the 50S ribosomal subunit.

Functionally, this protein binds to the 23S rRNA, and is important in its secondary structure. It is located near the subunit interface in the base of the L7/L12 stalk, and near the tRNA binding site of the peptidyltransferase center. In Actinobacillus pleuropneumoniae serotype 5b (strain L20), this protein is Large ribosomal subunit protein uL6.